The chain runs to 228 residues: LexA repressor (228 aa).

A DNA-binding region (H-T-H motif) is located at residues 28–48 (IREIGEALDIRSTNGVNDHLK). Catalysis depends on for autocatalytic cleavage activity residues serine 146 and lysine 183.

It belongs to the peptidase S24 family. As to quaternary structure, homodimer.

It catalyses the reaction Hydrolysis of Ala-|-Gly bond in repressor LexA.. In terms of biological role, represses a number of genes involved in the response to DNA damage (SOS response), including recA and lexA. In the presence of single-stranded DNA, RecA interacts with LexA causing an autocatalytic cleavage which disrupts the DNA-binding part of LexA, leading to derepression of the SOS regulon and eventually DNA repair. The protein is LexA repressor of Anaeromyxobacter dehalogenans (strain 2CP-1 / ATCC BAA-258).